A 259-amino-acid polypeptide reads, in one-letter code: Cytosolic Fe-S cluster assembly factor Nubp2 homolog (259 aa).

14–21 (GKGGVGKS) contributes to the ATP binding site. [4Fe-4S] cluster contacts are provided by C188 and C191.

Belongs to the Mrp/NBP35 ATP-binding proteins family. NUBP2/CFD1 subfamily. In terms of assembly, heterotetramer of 2 Nubp1 and 2 Nubp2 chains. [4Fe-4S] cluster is required as a cofactor.

It is found in the cytoplasm. Its function is as follows. Component of the cytosolic iron-sulfur (Fe/S) protein assembly (CIA) machinery. Required for maturation of extramitochondrial Fe-S proteins. The Nubp1-Nubp2 heterotetramer forms a Fe-S scaffold complex, mediating the de novo assembly of an Fe-S cluster and its transfer to target apoproteins. The polypeptide is Cytosolic Fe-S cluster assembly factor Nubp2 homolog (Anopheles gambiae (African malaria mosquito)).